A 478-amino-acid polypeptide reads, in one-letter code: Protein nucleotidyltransferase YdiU (478 aa).

Residues G83, G85, R86, K106, D118, G119, R169, and R176 each coordinate ATP. D245 serves as the catalytic Proton acceptor. Residues N246 and D255 each coordinate Mg(2+). D255 lines the ATP pocket.

The protein belongs to the SELO family. It depends on Mg(2+) as a cofactor. Mn(2+) is required as a cofactor.

It catalyses the reaction L-seryl-[protein] + ATP = 3-O-(5'-adenylyl)-L-seryl-[protein] + diphosphate. The enzyme catalyses L-threonyl-[protein] + ATP = 3-O-(5'-adenylyl)-L-threonyl-[protein] + diphosphate. It carries out the reaction L-tyrosyl-[protein] + ATP = O-(5'-adenylyl)-L-tyrosyl-[protein] + diphosphate. The catalysed reaction is L-histidyl-[protein] + UTP = N(tele)-(5'-uridylyl)-L-histidyl-[protein] + diphosphate. It catalyses the reaction L-seryl-[protein] + UTP = O-(5'-uridylyl)-L-seryl-[protein] + diphosphate. The enzyme catalyses L-tyrosyl-[protein] + UTP = O-(5'-uridylyl)-L-tyrosyl-[protein] + diphosphate. Nucleotidyltransferase involved in the post-translational modification of proteins. It can catalyze the addition of adenosine monophosphate (AMP) or uridine monophosphate (UMP) to a protein, resulting in modifications known as AMPylation and UMPylation. This is Protein nucleotidyltransferase YdiU from Exiguobacterium sp. (strain ATCC BAA-1283 / AT1b).